Reading from the N-terminus, the 236-residue chain is Small ribosomal subunit protein uS10m (236 aa).

Residues 1 to 24 (MMRQSIRPLRAFSSEVSWIARRTQ) constitute a mitochondrion transit peptide. Residues 29–49 (KPGDLVPNKPEPSKNEQEPRF) form a disordered region. The segment covering 39 to 49 (EPSKNEQEPRF) has biased composition (basic and acidic residues).

This sequence belongs to the universal ribosomal protein uS10 family. As to quaternary structure, part of the mitochondrial small ribosomal subunit.

It is found in the mitochondrion. Involved in mitochondrial genome encoded proteins translation. Involved in the binding of tRNA to the ribosomes. In Gibberella zeae (strain ATCC MYA-4620 / CBS 123657 / FGSC 9075 / NRRL 31084 / PH-1) (Wheat head blight fungus), this protein is Small ribosomal subunit protein uS10m (RSM10).